We begin with the raw amino-acid sequence, 225 residues long: Uracil-DNA glycosylase (225 aa).

The active-site Proton acceptor is D65.

Belongs to the uracil-DNA glycosylase (UDG) superfamily. UNG family.

Its subcellular location is the cytoplasm. The enzyme catalyses Hydrolyzes single-stranded DNA or mismatched double-stranded DNA and polynucleotides, releasing free uracil.. In terms of biological role, excises uracil residues from the DNA which can arise as a result of misincorporation of dUMP residues by DNA polymerase or due to deamination of cytosine. The protein is Uracil-DNA glycosylase of Clostridium botulinum (strain Alaska E43 / Type E3).